A 190-amino-acid polypeptide reads, in one-letter code: Recombination protein RecR (190 aa).

The C4-type zinc finger occupies 58-73 (CEQCGALSENELCEIC). A Toprim domain is found at 81–167 (NILCIVESPK…TFSKIAQGIP (87 aa)).

The protein belongs to the RecR family.

Functionally, may play a role in DNA repair. It seems to be involved in an RecBC-independent recombinational process of DNA repair. It may act with RecF and RecO. The sequence is that of Recombination protein RecR from Campylobacter jejuni (strain RM1221).